The sequence spans 262 residues: 3-methyl-2-oxobutanoate hydroxymethyltransferase (262 aa).

The Mg(2+) site is built by aspartate 42 and aspartate 81. Residues 42 to 43 (DS), aspartate 81, and lysine 110 each bind 3-methyl-2-oxobutanoate. A Mg(2+)-binding site is contributed by glutamate 112. Glutamate 180 acts as the Proton acceptor in catalysis.

This sequence belongs to the PanB family. Homodecamer; pentamer of dimers. The cofactor is Mg(2+).

It localises to the cytoplasm. It catalyses the reaction 3-methyl-2-oxobutanoate + (6R)-5,10-methylene-5,6,7,8-tetrahydrofolate + H2O = 2-dehydropantoate + (6S)-5,6,7,8-tetrahydrofolate. It participates in cofactor biosynthesis; (R)-pantothenate biosynthesis; (R)-pantoate from 3-methyl-2-oxobutanoate: step 1/2. Catalyzes the reversible reaction in which hydroxymethyl group from 5,10-methylenetetrahydrofolate is transferred onto alpha-ketoisovalerate to form ketopantoate. In Legionella pneumophila (strain Lens), this protein is 3-methyl-2-oxobutanoate hydroxymethyltransferase.